The chain runs to 490 residues: Probable cytosol aminopeptidase (490 aa).

Residues lysine 262 and aspartate 267 each contribute to the Mn(2+) site. Lysine 274 is an active-site residue. The Mn(2+) site is built by aspartate 285, aspartate 344, and glutamate 346. Residue arginine 348 is part of the active site.

This sequence belongs to the peptidase M17 family. The cofactor is Mn(2+).

It is found in the cytoplasm. It carries out the reaction Release of an N-terminal amino acid, Xaa-|-Yaa-, in which Xaa is preferably Leu, but may be other amino acids including Pro although not Arg or Lys, and Yaa may be Pro. Amino acid amides and methyl esters are also readily hydrolyzed, but rates on arylamides are exceedingly low.. The enzyme catalyses Release of an N-terminal amino acid, preferentially leucine, but not glutamic or aspartic acids.. In terms of biological role, presumably involved in the processing and regular turnover of intracellular proteins. Catalyzes the removal of unsubstituted N-terminal amino acids from various peptides. This chain is Probable cytosol aminopeptidase, found in Xanthomonas oryzae pv. oryzae (strain MAFF 311018).